The primary structure comprises 335 residues: Serpentine receptor class alpha-25 (335 aa).

Helical transmembrane passes span 22 to 42, 151 to 171, 195 to 215, 245 to 265, and 280 to 300; these read IPVKISFLIIATVIFLSFYFA, LLIIQCLLSFGTYYVGLYGVP, FRTVVMVFCIIVIIFVYYLSV, CILIVLQFACILMSSYGVNYI, and LAPFFAGVTYASLCLPLVIYF.

This sequence belongs to the nematode receptor-like protein sra family.

Its subcellular location is the membrane. This chain is Serpentine receptor class alpha-25 (sra-25), found in Caenorhabditis elegans.